The chain runs to 87 residues: Protein ORF3 (87 aa).

Residues glycine 58–methionine 87 form a disordered region. Residues proline 67–proline 70 carry the PTAP/PSAP motif motif.

This sequence belongs to the hepevirus ORF3 protein family. Post-translationally, palmitoylated in the N-terminus.

It localises to the host endoplasmic reticulum membrane. The protein localises to the host cytoplasm. It is found in the host cytoskeleton. Its subcellular location is the virion. The protein resides in the host cell membrane. In terms of biological role, small multifunctional phosphoprotein involved in virion morphogenesis, egress and counteracting host innate immunity. The polypeptide is Protein ORF3 (Avian hepatitis E virus (isolate Chicken/California/Meng) (AHEV)).